The chain runs to 68 residues: MKNYEIAAMDKKELLSKIKELENRLADLNFYQAIEPAQNPMVFRNLKRDIARMKTRLTQIDRQEKSNA.

It belongs to the universal ribosomal protein uL29 family.

This chain is Large ribosomal subunit protein uL29, found in Chlorobaculum tepidum (strain ATCC 49652 / DSM 12025 / NBRC 103806 / TLS) (Chlorobium tepidum).